A 62-amino-acid chain; its full sequence is Defensin BmKDfsin4 (62 aa).

The N-terminal stretch at M1–A24 is a signal peptide. 3 disulfide bridges follow: C28/C49, C35/C57, and C39/C59.

Belongs to the invertebrate defensin family. Type 2 subfamily.

The protein localises to the secreted. In terms of biological role, dual-function peptide with antimicrobial and potassium channel-blocking activities. Shows inhibitory activity against Gram-positive bacteria such as S.aureus, B.subtilis, and M.luteus as well as methicillin-resistant S.aureus (MIC=0.1-20 uM). Does not act on bacteria by disrupting membranes. Also moderately inhibits Kv1.1/KCNA1 (25.2% inhibition at 1 uM), Kv1.2/KCNA2 (30.5% inhibition at 1 uM), and Kv1.3/KCNA3 potassium channels (IC(50)=510.2 nM, 61% inhibition at 1 uM). Inhibits potassium channels by interacting with the pore region. Does not show hemolytic activity. In vitro, dose-dependently decreases the production of Hepatitis B virus (HBV) DNA and HBV viral proteins in both culture medium and cell lysate. The protein is Defensin BmKDfsin4 of Olivierus martensii (Manchurian scorpion).